Here is a 378-residue protein sequence, read N- to C-terminus: Bifunctional enzyme IspD/IspF (378 aa).

Positions 1 to 222 (MTETVAIIVA…RLLSPTGAPR (222 aa)) are 2-C-methyl-D-erythritol 4-phosphate cytidylyltransferase. Residues 222–378 (RIGKGYDVHE…EAVALLMPKG (157 aa)) are 2-C-methyl-D-erythritol 2,4-cyclodiphosphate synthase. The a divalent metal cation site is built by aspartate 228 and histidine 230. Residues 228–230 (DVH) and 254–255 (HS) each bind 4-CDP-2-C-methyl-D-erythritol 2-phosphate. Position 262 (histidine 262) interacts with a divalent metal cation. Residues 276-278 (DIG), 352-355 (TTTE), phenylalanine 359, and arginine 362 each bind 4-CDP-2-C-methyl-D-erythritol 2-phosphate.

It in the N-terminal section; belongs to the IspD/TarI cytidylyltransferase family. IspD subfamily. The protein in the C-terminal section; belongs to the IspF family. The cofactor is a divalent metal cation.

It catalyses the reaction 2-C-methyl-D-erythritol 4-phosphate + CTP + H(+) = 4-CDP-2-C-methyl-D-erythritol + diphosphate. It carries out the reaction 4-CDP-2-C-methyl-D-erythritol 2-phosphate = 2-C-methyl-D-erythritol 2,4-cyclic diphosphate + CMP. Its pathway is isoprenoid biosynthesis; isopentenyl diphosphate biosynthesis via DXP pathway; isopentenyl diphosphate from 1-deoxy-D-xylulose 5-phosphate: step 2/6. It functions in the pathway isoprenoid biosynthesis; isopentenyl diphosphate biosynthesis via DXP pathway; isopentenyl diphosphate from 1-deoxy-D-xylulose 5-phosphate: step 4/6. Its function is as follows. Bifunctional enzyme that catalyzes the formation of 4-diphosphocytidyl-2-C-methyl-D-erythritol from CTP and 2-C-methyl-D-erythritol 4-phosphate (MEP) (IspD), and catalyzes the conversion of 4-diphosphocytidyl-2-C-methyl-D-erythritol 2-phosphate (CDP-ME2P) to 2-C-methyl-D-erythritol 2,4-cyclodiphosphate (ME-CPP) with a corresponding release of cytidine 5-monophosphate (CMP) (IspF). This Hyphomonas neptunium (strain ATCC 15444) protein is Bifunctional enzyme IspD/IspF.